The primary structure comprises 615 residues: Chaperone protein HscA homolog (615 aa).

The protein belongs to the heat shock protein 70 family.

Functionally, chaperone involved in the maturation of iron-sulfur cluster-containing proteins. Has a low intrinsic ATPase activity which is markedly stimulated by HscB. The polypeptide is Chaperone protein HscA homolog (Aeromonas salmonicida (strain A449)).